Reading from the N-terminus, the 504-residue chain is Maturase K (504 aa).

Belongs to the intron maturase 2 family. MatK subfamily.

The protein localises to the plastid. Its subcellular location is the chloroplast. In terms of biological role, usually encoded in the trnK tRNA gene intron. Probably assists in splicing its own and other chloroplast group II introns. The protein is Maturase K of Impatiens capensis (Spotted jewelweed).